Consider the following 41-residue polypeptide: MKVRSSLKSLKSRHRDCKIVRRKGRVYVINKTDPRFKAKQG.

This sequence belongs to the bacterial ribosomal protein bL36 family.

This Hyphomonas neptunium (strain ATCC 15444) protein is Large ribosomal subunit protein bL36.